The following is a 546-amino-acid chain: MEPLLFNSGKANPSQDVFIDVEVGDITTKYGSTNTGSFSSMDTVEAQAIKAETARFMEVPQGRHLGVFSTVVLFVSRIMGSGIFAVPSVILLNTGGNKLIYFAIWVFSAAIAFAGLYLFLEFGSWIPKSGGRKNFLERSFERPRLLISVVFSCYSVLTGYALTGSIVFGKYVLSAFGVTDDSWSKYVSISFIIFAVLIHGVSVRHGVFIQNALGGLKLIMIVLMCFAGLYTLFFYKSTGQVAWDLPVTQVEKDSLLSVSSIATAFISSFFCFSGWDTVHTVTSEIKNPVKTLKVSGPLSLIICFVCYTMMNVAYLKVLTYEEIVSAGPLVGSVLFTKLFGPRVGGKFIAFSIAISAASNILVVIYSISRVNQEIFKEGYLPFSIHMSKNWPFDAPLPSISLCGFITIAWILILPKEGESFNYLVSMDGYGNQFFLLLVAIGLFIWRFKHKNEVPEIRASTFGVLAIITLSLYMLMAPFFADPSLNRVGFLPPYQIMSLLVIVACFFFWLVKFVLLPKFFHYKLLPKITYLHDGLIVTEWVKKPCLC.

Residues 1–70 (MEPLLFNSGK…QGRHLGVFST (70 aa)) are Extracellular-facing. A helical transmembrane segment spans residues 71 to 91 (VVLFVSRIMGSGIFAVPSVIL). Residues 92 to 98 (LNTGGNK) lie on the Cytoplasmic side of the membrane. The helical transmembrane segment at 99–119 (LIYFAIWVFSAAIAFAGLYLF) threads the bilayer. Over 120 to 148 (LEFGSWIPKSGGRKNFLERSFERPRLLIS) the chain is Extracellular. A helical membrane pass occupies residues 149–169 (VVFSCYSVLTGYALTGSIVFG). Residues 170 to 188 (KYVLSAFGVTDDSWSKYVS) are Cytoplasmic-facing. The chain crosses the membrane as a helical span at residues 189-209 (ISFIIFAVLIHGVSVRHGVFI). Residues 210–213 (QNAL) lie on the Extracellular side of the membrane. A helical transmembrane segment spans residues 214 to 234 (GGLKLIMIVLMCFAGLYTLFF). Over 235–254 (YKSTGQVAWDLPVTQVEKDS) the chain is Cytoplasmic. A helical membrane pass occupies residues 255–275 (LLSVSSIATAFISSFFCFSGW). Residues 276-297 (DTVHTVTSEIKNPVKTLKVSGP) lie on the Extracellular side of the membrane. The chain crosses the membrane as a helical span at residues 298 to 318 (LSLIICFVCYTMMNVAYLKVL). Position 319 (T319) is a topological domain, cytoplasmic. Residues 320 to 340 (YEEIVSAGPLVGSVLFTKLFG) traverse the membrane as a helical segment. The Extracellular segment spans residues 341–346 (PRVGGK). A helical membrane pass occupies residues 347 to 367 (FIAFSIAISAASNILVVIYSI). The Cytoplasmic portion of the chain corresponds to 368-393 (SRVNQEIFKEGYLPFSIHMSKNWPFD). Residues 394–414 (APLPSISLCGFITIAWILILP) traverse the membrane as a helical segment. Topologically, residues 415-423 (KEGESFNYL) are extracellular. Residues 424-444 (VSMDGYGNQFFLLLVAIGLFI) traverse the membrane as a helical segment. Over 445 to 459 (WRFKHKNEVPEIRAS) the chain is Cytoplasmic. Residues 460–480 (TFGVLAIITLSLYMLMAPFFA) form a helical membrane-spanning segment. The Extracellular portion of the chain corresponds to 481-494 (DPSLNRVGFLPPYQ). The chain crosses the membrane as a helical span at residues 495-515 (IMSLLVIVACFFFWLVKFVLL). At 516 to 546 (PKFFHYKLLPKITYLHDGLIVTEWVKKPCLC) the chain is on the cytoplasmic side.

This sequence to yeast high affinity methionine permease (MUP1).

It localises to the membrane. Very low affinity permease for methionine. In Saccharomyces cerevisiae (strain ATCC 204508 / S288c) (Baker's yeast), this protein is Low-affinity methionine permease (MUP3).